The chain runs to 342 residues: tRNA N6-adenosine threonylcarbamoyltransferase (342 aa).

Fe cation contacts are provided by H111 and H115. Substrate-binding positions include 133 to 137 (AVSGG), D166, G179, D183, and N272. D300 is a binding site for Fe cation.

Belongs to the KAE1 / TsaD family. It depends on Fe(2+) as a cofactor.

The protein localises to the cytoplasm. It carries out the reaction L-threonylcarbamoyladenylate + adenosine(37) in tRNA = N(6)-L-threonylcarbamoyladenosine(37) in tRNA + AMP + H(+). Its function is as follows. Required for the formation of a threonylcarbamoyl group on adenosine at position 37 (t(6)A37) in tRNAs that read codons beginning with adenine. Is involved in the transfer of the threonylcarbamoyl moiety of threonylcarbamoyl-AMP (TC-AMP) to the N6 group of A37, together with TsaE and TsaB. TsaD likely plays a direct catalytic role in this reaction. The sequence is that of tRNA N6-adenosine threonylcarbamoyltransferase from Geobacter sp. (strain M21).